Here is an 85-residue protein sequence, read N- to C-terminus: Small ribosomal subunit protein bS18c (85 aa).

Belongs to the bacterial ribosomal protein bS18 family. In terms of assembly, part of the 30S ribosomal subunit.

Its subcellular location is the plastid. The protein localises to the chloroplast. This chain is Small ribosomal subunit protein bS18c, found in Tupiella akineta (Green alga).